We begin with the raw amino-acid sequence, 98 residues long: Large ribosomal subunit protein mL53 (98 aa).

Belongs to the mitochondrion-specific ribosomal protein mL53 family. In terms of assembly, component of the mitochondrial large ribosomal subunit (mt-LSU). Mature yeast 74S mitochondrial ribosomes consist of a small (37S) and a large (54S) subunit. The 37S small subunit contains a 15S ribosomal RNA (15S mt-rRNA) and 34 different proteins. The 54S large subunit contains a 21S rRNA (21S mt-rRNA) and 46 different proteins.

It localises to the mitochondrion. Functionally, component of the mitochondrial ribosome (mitoribosome), a dedicated translation machinery responsible for the synthesis of mitochondrial genome-encoded proteins, including at least some of the essential transmembrane subunits of the mitochondrial respiratory chain. The mitoribosomes are attached to the mitochondrial inner membrane and translation products are cotranslationally integrated into the membrane. In Saccharomyces cerevisiae (strain ATCC 204508 / S288c) (Baker's yeast), this protein is Large ribosomal subunit protein mL53 (MRPL44).